Reading from the N-terminus, the 470-residue chain is Neuraminidase (470 aa).

Residues 1–14 (MNPNQKIITIGSVS) lie on the Intravirion side of the membrane. The involved in apical transport and lipid raft association stretch occupies residues 11 to 32 (GSVSLGLVVLNILLHIVSITIT). Residues 15-35 (LGLVVLNILLHIVSITITVLV) form a helical membrane-spanning segment. Positions 32 to 86 (TVLVLPGNGNNPSCNETVIREYNETVRIERVTQWHNTNVIEYLERPESDHFMNNT) are hypervariable stalk region. Topologically, residues 36 to 470 (LPGNGNNPSC…AILPFDIDKM (435 aa)) are virion surface. Residues Asn-46, Asn-54, and Asn-84 are each glycosylated (N-linked (GlcNAc...) asparagine; by host). Positions 89-470 (LCDAKGFAPF…AILPFDIDKM (382 aa)) are head of neuraminidase. Disulfide bonds link Cys-90-Cys-417, Cys-122-Cys-127, Cys-182-Cys-229, Cys-231-Cys-236, Cys-277-Cys-290, Cys-279-Cys-288, Cys-316-Cys-335, and Cys-421-Cys-446. Residue Arg-116 coordinates substrate. A glycan (N-linked (GlcNAc...) asparagine; by host) is linked at Asn-144. The active-site Proton donor/acceptor is Asp-149. Position 150 (Arg-150) interacts with substrate. Substrate is bound at residue 275–276 (EE). Arg-291 contacts substrate. Asp-292 serves as a coordination point for Ca(2+). The N-linked (GlcNAc...) asparagine; by host glycan is linked to Asn-293. Positions 296 and 322 each coordinate Ca(2+). Arg-368 provides a ligand contact to substrate. Residue Asn-398 is glycosylated (N-linked (GlcNAc...) asparagine; by host). Tyr-402 (nucleophile) is an active-site residue.

The protein belongs to the glycosyl hydrolase 34 family. In terms of assembly, homotetramer. Requires Ca(2+) as cofactor. N-glycosylated.

The protein localises to the virion membrane. The protein resides in the host apical cell membrane. It catalyses the reaction Hydrolysis of alpha-(2-&gt;3)-, alpha-(2-&gt;6)-, alpha-(2-&gt;8)- glycosidic linkages of terminal sialic acid residues in oligosaccharides, glycoproteins, glycolipids, colominic acid and synthetic substrates.. Inhibited by the neuraminidase inhibitors zanamivir (Relenza) and oseltamivir (Tamiflu). These drugs interfere with the release of progeny virus from infected cells and are effective against all influenza strains. Resistance to neuraminidase inhibitors is quite rare. Functionally, catalyzes the removal of terminal sialic acid residues from viral and cellular glycoconjugates. Cleaves off the terminal sialic acids on the glycosylated HA during virus budding to facilitate virus release. Additionally helps virus spread through the circulation by further removing sialic acids from the cell surface. These cleavages prevent self-aggregation and ensure the efficient spread of the progeny virus from cell to cell. Otherwise, infection would be limited to one round of replication. Described as a receptor-destroying enzyme because it cleaves a terminal sialic acid from the cellular receptors. May facilitate viral invasion of the upper airways by cleaving the sialic acid moieties on the mucin of the airway epithelial cells. Likely to plays a role in the budding process through its association with lipid rafts during intracellular transport. May additionally display a raft-association independent effect on budding. Plays a role in the determination of host range restriction on replication and virulence. Sialidase activity in late endosome/lysosome traffic seems to enhance virus replication. In Aves, this protein is Neuraminidase.